The chain runs to 910 residues: DNA mismatch repair protein MutS (910 aa).

Position 658–665 (658–665) interacts with ATP; the sequence is GPNMGGKS.

This sequence belongs to the DNA mismatch repair MutS family.

In terms of biological role, this protein is involved in the repair of mismatches in DNA. It is possible that it carries out the mismatch recognition step. This protein has a weak ATPase activity. The sequence is that of DNA mismatch repair protein MutS from Brucella anthropi (strain ATCC 49188 / DSM 6882 / CCUG 24695 / JCM 21032 / LMG 3331 / NBRC 15819 / NCTC 12168 / Alc 37) (Ochrobactrum anthropi).